Consider the following 351-residue polypeptide: Protein MSS2, mitochondrial (351 aa).

TPR repeat units follow at residues 155 to 188 (HLTV…ENST) and 260 to 294 (KECF…MDLE).

Interacts with COX18.

It localises to the mitochondrion inner membrane. Required to stabilize mitochondrial cytochrome C oxidase subunit 2 (COX2) and to translocate the C-terminal domain of COX2 through the inner membrane. This Saccharomyces cerevisiae (strain ATCC 204508 / S288c) (Baker's yeast) protein is Protein MSS2, mitochondrial (MSS2).